The chain runs to 298 residues: Plasmodesmata-located protein 7 (298 aa).

Positions 1–30 (MPMAKLRNIIKTLSIFFFLIAATAPSLSSA) are cleaved as a signal peptide. Topologically, residues 31–258 (TSATDTFVFG…YKTNYGGEKT (228 aa)) are extracellular. Gnk2-homologous domains follow at residues 35-139 (DTFV…NISF) and 140-240 (LGQE…TDGA). 6 disulfides stabilise this stretch: C42–C117, C93–C102, C105–C130, C152–C218, C194–C203, and C206–C231. A helical transmembrane segment spans residues 259-279 (FAIIIGLLAAVVLLIIFLLFL). The necessary and sufficient for plasmodesmal targeting stretch occupies residues 259-279 (FAIIIGLLAAVVLLIIFLLFL). Residues 280–298 (RGVCSRGGDFSILHSFTLI) lie on the Cytoplasmic side of the membrane.

This sequence belongs to the cysteine-rich repeat secretory protein family. Plasmodesmata-located proteins (PDLD) subfamily. As to quaternary structure, (Microbial infection) Interacts with Grapevine fanleaf virus (GFLV) 2B-MP. Highly expressed in lateral root and elongation zone.

It localises to the cell membrane. Its subcellular location is the cell junction. The protein resides in the plasmodesma. Functionally, modulates cell-to-cell trafficking. The sequence is that of Plasmodesmata-located protein 7 from Arabidopsis thaliana (Mouse-ear cress).